Reading from the N-terminus, the 316-residue chain is tRNA uridine(34) hydroxylase (316 aa).

The Rhodanese domain occupies 123–217 (LDEDTVVIDA…YGKNPETRGE (95 aa)). The active-site Cysteine persulfide intermediate is the Cys177.

This sequence belongs to the TrhO family.

It catalyses the reaction uridine(34) in tRNA + AH2 + O2 = 5-hydroxyuridine(34) in tRNA + A + H2O. Its function is as follows. Catalyzes oxygen-dependent 5-hydroxyuridine (ho5U) modification at position 34 in tRNAs. The chain is tRNA uridine(34) hydroxylase from Enterococcus faecalis (strain ATCC 700802 / V583).